The following is a 260-amino-acid chain: Taurine import ATP-binding protein TauB (260 aa).

The region spanning 6–235 (AHQVSVVYAS…RYAAGESMRS (230 aa)) is the ABC transporter domain. 40–47 (GASGCGKS) contributes to the ATP binding site.

The protein belongs to the ABC transporter superfamily. Taurine importer (TC 3.A.1.17.1) family. In terms of assembly, the complex is composed of two ATP-binding proteins (TauB), two transmembrane proteins (TauC) and a solute-binding protein (TauA).

The protein localises to the cell inner membrane. It carries out the reaction taurine(out) + ATP + H2O = taurine(in) + ADP + phosphate + H(+). Part of the ABC transporter complex TauABC involved in taurine import. Responsible for energy coupling to the transport system. This is Taurine import ATP-binding protein TauB from Burkholderia thailandensis (strain ATCC 700388 / DSM 13276 / CCUG 48851 / CIP 106301 / E264).